The chain runs to 476 residues: Bifunctional protein HldE (476 aa).

The ribokinase stretch occupies residues 1-320 (MQNPHIPSFA…RAVHQEGGSG (320 aa)). 196-199 (NLSE) provides a ligand contact to ATP. The active site involves aspartate 265. The interval 345–476 (FTNGCFDIIH…KIVERIREKD (132 aa)) is cytidylyltransferase.

The protein in the N-terminal section; belongs to the carbohydrate kinase PfkB family. In the C-terminal section; belongs to the cytidylyltransferase family. As to quaternary structure, homodimer.

The enzyme catalyses D-glycero-beta-D-manno-heptose 7-phosphate + ATP = D-glycero-beta-D-manno-heptose 1,7-bisphosphate + ADP + H(+). It catalyses the reaction D-glycero-beta-D-manno-heptose 1-phosphate + ATP + H(+) = ADP-D-glycero-beta-D-manno-heptose + diphosphate. The protein operates within nucleotide-sugar biosynthesis; ADP-L-glycero-beta-D-manno-heptose biosynthesis; ADP-L-glycero-beta-D-manno-heptose from D-glycero-beta-D-manno-heptose 7-phosphate: step 1/4. Its pathway is nucleotide-sugar biosynthesis; ADP-L-glycero-beta-D-manno-heptose biosynthesis; ADP-L-glycero-beta-D-manno-heptose from D-glycero-beta-D-manno-heptose 7-phosphate: step 3/4. Catalyzes the phosphorylation of D-glycero-D-manno-heptose 7-phosphate at the C-1 position to selectively form D-glycero-beta-D-manno-heptose-1,7-bisphosphate. Its function is as follows. Catalyzes the ADP transfer from ATP to D-glycero-beta-D-manno-heptose 1-phosphate, yielding ADP-D-glycero-beta-D-manno-heptose. This is Bifunctional protein HldE from Alcanivorax borkumensis (strain ATCC 700651 / DSM 11573 / NCIMB 13689 / SK2).